The following is a 587-amino-acid chain: MAEKGDCIASVYGYDLGGRFVDFQPLGFGVNGLVLSAVDSRACRKVAVKKIALSDARSMKHALREIKIIRRLDHDNIVKVYEVLGPKGTDLQGELFKFSVAYIVQEYMETDLARLLEQGTLAEEHAKLFMYQLLRGLKYIHSANVLHRDLKPANIFISTEDLVLKIGDFGLARIVDQHYSHKGYLSEGLVTKWYRSPRLLLSPNNYTKAIDMWAAGCILAEMLTGRMLFAGAHELEQMQLILETIPVIREEDKDELLRVMPSFVSSTWEVKRPLRKLLPEVNSEAIDFLEKILTFNPMDRLTAEMGLQHPYMSPYSCPEDEPTSQHPFRIEDEIDDIVLMAANQSQLSNWDTCSSRYPVSLSSDLEWRPDRCQDASEVQRDPRAGSAPLAEDVQVDPRKDSHSSSERFLEQSHSSMERAFEADYGRSCDYKVGSPSYLDKLLWRDNKPHHYSEPKLILDLSHWKQAAGAPPTATGLADTGAREDEPASLFLEIAQWVKSTQGGPEHASPPADDPERRLSASPPGRPAPVDGGASPQFDLDVFISRALKLCTKPEDLPDNKLGDLNGACIPEHPGDLVQTEAFSKERW.

A Protein kinase domain is found at 20 to 312 (FVDFQPLGFG…AEMGLQHPYM (293 aa)). ATP contacts are provided by residues 26-34 (LGFGVNGLV) and lysine 49. Aspartate 149 acts as the Proton acceptor in catalysis. A Phosphoserine; by PAK1, PAK2 and PAK3 modification is found at serine 186. An SEG motif motif is present at residues 186-188 (SEG). The FRIEDE motif motif lies at 328–333 (FRIEDE). Basic and acidic residues-rich tracts occupy residues 373 to 383 (QDASEVQRDPR) and 395 to 413 (VDPRKDSHSSSERFLEQSH). The tract at residues 373 to 413 (QDASEVQRDPRAGSAPLAEDVQVDPRKDSHSSSERFLEQSH) is disordered. At serine 434 the chain carries Phosphoserine. A disordered region spans residues 499–534 (STQGGPEHASPPADDPERRLSASPPGRPAPVDGGAS).

It belongs to the protein kinase superfamily. CMGC Ser/Thr protein kinase family. MAP kinase subfamily. As to quaternary structure, homodimer. Heterodimer with ERK3/MAPK6. Interacts with (via FRIEDE motif) MAPKAPK5. Requires Mg(2+) as cofactor. Post-translationally, phosphorylated at Ser-186 by PAK1, PAK2 and PAK3 resulting in catalytic activation. Phosphorylated by MAPKAPK5 at other sites. In terms of tissue distribution, high expression in heart and brain.

It is found in the cytoplasm. The protein resides in the nucleus. The catalysed reaction is L-seryl-[protein] + ATP = O-phospho-L-seryl-[protein] + ADP + H(+). The enzyme catalyses L-threonyl-[protein] + ATP = O-phospho-L-threonyl-[protein] + ADP + H(+). With respect to regulation, activated by phosphorylation at Ser-186. Atypical MAPK protein. Phosphorylates microtubule-associated protein 2 (MAP2) and MAPKAPK5. The precise role of the complex formed with MAPKAPK5 is still unclear, but the complex follows a complex set of phosphorylation events: upon interaction with atypical MAPKAPK5, ERK4/MAPK4 is phosphorylated at Ser-186 and then mediates phosphorylation and activation of MAPKAPK5, which in turn phosphorylates ERK4/MAPK4. May promote entry in the cell cycle. This is Mitogen-activated protein kinase 4 (MAPK4) from Homo sapiens (Human).